A 1249-amino-acid chain; its full sequence is Nuclear envelope pore membrane protein POM 121 (1249 aa).

The segment covering 1 to 10 (MSPAAAAAGA) has biased composition (low complexity). Residues 1-27 (MSPAAAAAGAGERRRPIASVRDGRGRG) form a disordered region. Residues 1 to 34 (MSPAAAAAGAGERRRPIASVRDGRGRGCGGPARA) are cisternal side. Residues 1–285 (MSPAAAAAGA…APPDRRFSRS (285 aa)) are required for targeting to the nucleus and nuclear pore complex. Over residues 11–25 (GERRRPIASVRDGRG) the composition is skewed to basic and acidic residues. A helical membrane pass occupies residues 35–55 (VLLGLSLVGLLLYLVPAAAAL). The interval 56 to 1249 (AWLTVGATAA…QARRQHTRKK (1194 aa)) is pore side. Serine 94 carries the phosphoserine modification. 5 disordered regions span residues 136 to 220 (LMGS…CGTL), 319 to 530 (KEKK…LGYS), 602 to 776 (KKMQ…PVFS), 959 to 986 (PLPS…AKPA), and 1226 to 1249 (IGAG…TRKK). Residues 168–190 (ARPAPRSPPPRSPPPRSPPPSPP) are compositionally biased toward pro residues. A phosphoserine mark is found at serine 345, serine 351, serine 371, serine 393, and serine 396. Over residues 405 to 423 (IPSSSRNAITSSYSSTRGI) the composition is skewed to polar residues. A compositionally biased stretch (low complexity) spans 432–445 (PSSSPFSSPASSRS). Basic and acidic residues-rich tracts occupy residues 450-462 (RPAK…ELCH) and 472-486 (ADRE…DTTP). Over residues 491–502 (NSNSQSTPGSSG) the composition is skewed to polar residues. Low complexity predominate over residues 635-652 (PPLGLSQSGPPGLLPSPS). Over residues 683–696 (QAETATKPQATSAP) the composition is skewed to polar residues. 2 stretches are compositionally biased toward low complexity: residues 712–726 (SPSS…SAPP) and 749–770 (SVTA…TAPT). The segment covering 1239–1249 (LQARRQHTRKK) has biased composition (basic residues).

This sequence belongs to the POM121 family.

It is found in the nucleus. Its subcellular location is the nuclear pore complex. It localises to the nucleus membrane. The protein resides in the endoplasmic reticulum membrane. Functionally, essential component of the nuclear pore complex (NPC). The repeat-containing domain may be involved in anchoring components of the pore complex to the pore membrane. When overexpressed in cells induces the formation of cytoplasmic annulate lamellae (AL). In Homo sapiens (Human), this protein is Nuclear envelope pore membrane protein POM 121 (POM121).